A 162-amino-acid chain; its full sequence is Beta-carotene hydroxylase (162 aa).

Positions 8 to 135 (VATVLVMELT…GRDHCVSFGF (128 aa)) constitute a Fatty acid hydroxylase domain.

It belongs to the sterol desaturase family.

It catalyses the reaction all-trans-beta-carotene + 4 reduced [2Fe-2S]-[ferredoxin] + 2 O2 + 4 H(+) = all-trans-zeaxanthin + 4 oxidized [2Fe-2S]-[ferredoxin] + 2 H2O. The protein operates within carotenoid biosynthesis; astaxanthin biosynthesis. In terms of biological role, catalyzes the hydroxylation reaction from beta-carotene to zeaxanthin via beta-cryptoxanthin. In Paracoccus sp. (strain N81106 / MBIC 01143) (Agrobacterium aurantiacum), this protein is Beta-carotene hydroxylase (crtZ).